The sequence spans 206 residues: Large ribosomal subunit protein bL25 (206 aa).

Belongs to the bacterial ribosomal protein bL25 family. CTC subfamily. Part of the 50S ribosomal subunit; part of the 5S rRNA/L5/L18/L25 subcomplex. Contacts the 5S rRNA. Binds to the 5S rRNA independently of L5 and L18.

Its function is as follows. This is one of the proteins that binds to the 5S RNA in the ribosome where it forms part of the central protuberance. In Ralstonia nicotianae (strain ATCC BAA-1114 / GMI1000) (Ralstonia solanacearum), this protein is Large ribosomal subunit protein bL25.